Reading from the N-terminus, the 623-residue chain is Pyranose 2-oxidase (623 aa).

The first 27 residues, 1-27 (MSTSSSDPFFNFTKSSFRSAAAQKASA), serve as a signal peptide directing secretion. A propeptide spanning residues 28-38 (TSLPPLPGPDK) is cleaved from the precursor. H167 carries the post-translational modification Tele-8alpha-FAD histidine. Substrate is bound by residues Q448 and H450. H548 functions as the Proton acceptor in the catalytic mechanism. The active site involves N593.

Belongs to the GMC oxidoreductase family. As to quaternary structure, homotetramer. Requires FAD as cofactor. Post-translationally, not glycosylated.

It is found in the periplasm. It catalyses the reaction D-glucose + O2 = 2-dehydro-D-glucose + H2O2. Catalyzes the oxidation of various aldopyranoses and disaccharides on carbon-2 to the corresponding 2-keto sugars concomitant with the reduction of O(2) to H(2)O(2). Plays an important role in lignin degradation of wood rot fungi by supplying the essential cosubstrate H(2)O(2) for the ligninolytic peroxidases, lignin peroxidase and manganese-dependent peroxidase. The preferred substrate is D-glucose which is converted to 2-dehydro-D-glucose. Also acts on D-xylose, together with D-glucose the major sugars derived from wood, on L-sorbose, D-galactose and 1,5-anhydroglucitol, a diagnostic marker of diabetes mellitus. In Trametes versicolor (White-rot fungus), this protein is Pyranose 2-oxidase (P2OX).